We begin with the raw amino-acid sequence, 431 residues long: MRTVVWQSLSETQQDAILERPAITEGANITAAVAEVIAKVRAEGDAALFELTEKFDRIKPESIRVTEQEIEEASARLTAKMKQALEQAYANIAKFHNAQKPTPIKVETQPGVVCEQVTRPIQKVGLYIPGGSAPLPSTVLMLGVPAQIAGCRKVVLCSPPPIADEILYVAKLCNIDEVYNVGGGQAVAAMAYGTESVTKVDKIFGPGNAYVTEAKRQVSNDFRGAAIDMPAGPSEVLVIADETADADFIAADLLSQAEHGPDSQVVLVTPSVLIADQVTDAVQKQLKQLSRASIAEKALASSLIIIADSLTQAVSISNYYGPEHLIVQTKNPRELLPLLDNAGSIFLGDWSPESAGDYASGTNHVLPTYGYTRTYSSLGLADFSKRMTVQELSAEGLKNLAPTVVTMAEAEGLDAHKRAVTIRVEKLTARS.

Positions 127, 185, and 208 each coordinate NAD(+). The substrate site is built by S234, Q256, and H259. Zn(2+) contacts are provided by Q256 and H259. Residues E323 and H324 each act as proton acceptor in the active site. Residues H324, D357, E411, and H416 each contribute to the substrate site. D357 contributes to the Zn(2+) binding site. H416 is a binding site for Zn(2+).

It belongs to the histidinol dehydrogenase family. Zn(2+) is required as a cofactor.

The enzyme catalyses L-histidinol + 2 NAD(+) + H2O = L-histidine + 2 NADH + 3 H(+). The protein operates within amino-acid biosynthesis; L-histidine biosynthesis; L-histidine from 5-phospho-alpha-D-ribose 1-diphosphate: step 9/9. Functionally, catalyzes the sequential NAD-dependent oxidations of L-histidinol to L-histidinaldehyde and then to L-histidine. The protein is Histidinol dehydrogenase of Vibrio vulnificus (strain YJ016).